Reading from the N-terminus, the 1367-residue chain is MQRPFLLAYLVLSLLFNSALGFPTALVPRGSSEGTSCNSIVNGCPNLDFNWHMDQQNIMQYTLDVTSVSWVQDNTYQITIHVKGKENIDLKYLWSLKIIGVTGPKGTVQLYGYNENTYLIDNPTDFTATFEVYATQDVNSCQVWMPNFQIQFEYLQGSAAQYASSWQWGTTSFDLSTGCNNYDNQGHSQTDFPGFYWNIDCDNNCGGTKSSTTTSSTSESSTTTSSTSESSTTTSSTSESSTTTSSTSESSTSSSTTAPATPTTTSCTKEKPTPPTTTSCTKEKPTPPHHDTTPCTKKKTTTSKTCTKKTTTPVPTPSSSTTESSSAPVPTPSSSTTESSSAPVTSSTTESSSAPVPTPSSSTTESSSAPVTSSTTESSSAPVTSSTTESSSAPVPTPSSSTTESSSAPVTSSTTESSSAPVTSSTTESSSAPVTSSTTESSSAPVTSSTTESSSAPVPTPSSSTTESSSAPVTSSTTESSSAPVPTPSSSTTESSSAPVTSSTTESSSAPVPTPSSSTTESSSAPAPTPSSSTTESSSAPVTSSTTESSSAPVPTPSSSTTESSSTPVTSSTTESSSAPVPTPSSSTTESSSAPVPTPSSSTTESSSAPAPTPSSSTTESSSAPVTSSTTESSSAPVPTPSSSTTESSSAPVPTPSSSTTESSSAPVPTPSSSTTESSSAPVTSSTTESSSAPVTSSTTESSSAPVPTPSSSTTESSSAPVPTPSSSTTESSSAPVPTPSSSTTESSSAPVTSSTTESSSAPVPTPSSSTTESSSAPVPTPSSSTTESSSAPVPTPSSSTTESSVAPVPTPSSSSNITSSAPSSTPFSSSTESSSVPVPTPSSSTTESSSAPVSSSTTESSVAPVPTPSSSSNITSSAPSSIPFSSTTESFSTGTTVTPSSSKYPGSQTETSVSSTTETTIVPTKTTTSVTTPSTTTITTTVCSTGTNSAGETTSGCSPKTVTTTVPTTTTTSVTTSSTTTITTTVCSTGTNSAGETTSGCSPKTITTTVPCSTSPSETASESTTTSPTTPVTTVVSTTVVTTEYSTSTKPGGEITTTFVTKNIPTTYLTTIAPTPSVTTVTNFTPTTITTTVCSTGTNSAGETTSGCSPKTVTTTVPCSTGTGEYTTEATTLVTTAVTTTVVTTESSTGTNSAGKTTTGYTTKSVPTTYVTTLAPSAPVTPATNAVPTTITTTECSAATNAAGETTSVCSAKTIVSSASAGENTAPSATTPVTTAIPTTVITTESSVGTNSAGETTTGYTTKSIPTTYITTLIPGSNGAKNYETVATATNPISIKTTSQLATTASASSVAPVVTSPSLTGPLQSASGSAVATYSVPSISSTYQGAANIKVLGNFMWLLLALPVVF.

Residues 1-21 (MQRPFLLAYLVLSLLFNSALG) form the signal peptide. The region spanning 31–207 (SSEGTSCNSI…NIDCDNNCGG (177 aa)) is the Flo11 domain. Disulfide bonds link C37/C201, C44/C179, and C141/C205. Residues 209 to 267 (KSSTTTSSTSESSTTTSSTSESSTTTSSTSESSTTTSSTSESSTSSSTTAPATPTTTSC) are compositionally biased toward low complexity. Disordered stretches follow at residues 209-975 (KSST…TTSV) and 1008-1032 (TTTVPCSTSPSETASESTTTSPTTP). Tandem repeats lie at residues 210 to 219 (SSTTTSSTSE), 220 to 229 (SSTTTSSTSE), 230 to 239 (SSTTTSSTSE), 240 to 249 (SSTTTSSTSE), 262 to 274 (PTTTSCTKEKPTP), 275 to 287 (PTTTSCTKEKPTP), 313 to 327 (PVPTPSSSTTESSSA), 328 to 342 (PVPTPSSSTTESSSA), 343 to 354 (PVTSSTTESSSA), 355 to 369 (PVPTPSSSTTESSSA), 370 to 381 (PVTSSTTESSSA), 382 to 393 (PVTSSTTESSSA), 394 to 408 (PVPTPSSSTTESSSA), 409 to 420 (PVTSSTTESSSA), 421 to 432 (PVTSSTTESSSA), 433 to 444 (PVTSSTTESSSA), 445 to 456 (PVTSSTTESSSA), 457 to 471 (PVPTPSSSTTESSSA), 472 to 483 (PVTSSTTESSSA), 484 to 498 (PVPTPSSSTTESSSA), 499 to 510 (PVTSSTTESSSA), 511 to 525 (PVPTPSSSTTESSSA), 526 to 540 (PAPTPSSSTTESSSA), 541 to 552 (PVTSSTTESSSA), 568 to 579 (PVTSSTTESSSA), 580 to 594 (PVPTPSSSTTESSSA), 595 to 609 (PVPTPSSSTTESSSA), 610 to 624 (PAPTPSSSTTESSSA), 625 to 636 (PVTSSTTESSSA), 637 to 651 (PVPTPSSSTTESSSA), 652 to 666 (PVPTPSSSTTESSSA), 667 to 681 (PVPTPSSSTTESSSA), 682 to 693 (PVTSSTTESSSA), 694 to 705 (PVTSSTTESSSA), 706 to 720 (PVPTPSSSTTESSSA), 721 to 735 (PVPTPSSSTTESSSA), 736 to 750 (PVPTPSSSTTESSSA), 751 to 762 (PVTSSTTESSSA), 763 to 777 (PVPTPSSSTTESSSA), 778 to 792 (PVPTPSSSTTESSSA), 808 to 822 (PVPTPSSSSNITSSA), 838 to 852 (PVPTPSSSTTESSSA), 865 to 879 (PVPTPSSSSNITSSA), 937 to 968 (TTITTTVCSTGTNSAGETTSGCSPKTVTTTVP), and 981 to 1012 (TTITTTVCSTGTNSAGETTSGCSPKTITTTVP). The segment at 210 to 249 (SSTTTSSTSESSTTTSSTSESSTTTSSTSESSTTTSSTSE) is 4 X 10 AA repeats, Ser/Thr-rich. A 2 X 13 AA repeats, Thr-rich region spans residues 262–287 (PTTTSCTKEKPTPPTTTSCTKEKPTP). Positions 281-292 (TKEKPTPPHHDT) are enriched in basic and acidic residues. Composition is skewed to low complexity over residues 302–900 (TSKT…TVTP) and 910–948 (TETSVSSTTETTIVPTKTTTSVTTPSTTTITTTVCSTGT). Residues 313 to 852 (PVPTPSSSTT…SSSTTESSSA (540 aa)) form a 22 X 15 AA approximate repeats, Ser-rich region. The 15 X 12 AA repeats, Ser/Thr-rich stretch occupies residues 343–762 (PVTSSTTESS…TSSTTESSSA (420 aa)). N-linked (GlcNAc...) asparagine glycosylation is present at N817. An N-linked (GlcNAc...) asparagine glycan is attached at N874. Residues 937–1119 (TTITTTVCST…SPKTVTTTVP (183 aa)) form a 3 X 32 AA tandem repeats, Thr-rich region. The segment covering 949-961 (NSAGETTSGCSPK) has biased composition (polar residues). Low complexity predominate over residues 962–975 (TVTTTVPTTTTTSV). Residues 1014-1032 (STSPSETASESTTTSPTTP) are compositionally biased toward low complexity. The stretch at 1088–1119 (TTITTTVCSTGTNSAGETTSGCSPKTVTTTVP) is one 5-3 repeat. Residue G1346 is the site of GPI-anchor amidated glycine attachment. Residues 1347 to 1367 (AANIKVLGNFMWLLLALPVVF) constitute a propeptide, removed in mature form.

Belongs to the flocculin family. Highly divergent. Post-translationally, extensively O-mannosylated. The GPI-anchor is attached to the protein in the endoplasmic reticulum and serves to target the protein to the cell surface. There, the glucosamine-inositol phospholipid moiety is cleaved off and the GPI-modified mannoprotein is covalently attached via its lipidless GPI glycan remnant to the 1,6-beta-glucan of the outer cell wall layer. In terms of processing, a soluble form is probably produced by proteolytic cleavage at the cell surface (shedding).

The protein resides in the secreted. Its subcellular location is the cell wall. It localises to the membrane. In terms of biological role, homophilic binding protein that enables kin discrimination in heterogeneous yeast populations by mediating homotypic cell-cell interactions during flocculation, a reversible and asexual process in which cells adhere to form aggregates (flocs). Plays a role in cell-substrate adhesion, haploid invasive growth, diploid pseudohyphae formation and biofilm (flor) development. Adhesive activity is inhibited by mannose, but not by glucose, maltose, sucrose or galactose. In Saccharomyces cerevisiae (strain ATCC 204508 / S288c) (Baker's yeast), this protein is Flocculation protein FLO11.